Consider the following 546-residue polypeptide: MFLLSVFFPLLGGLVNTSPIARFLGHRGSSIIAIGCMVVAFISSVVIYYEVVFMGCAVSVDVFGTWFSVGTFHAGWTFNFDLLTANMLFTVTGVSMAVHMYACDYMRQDPHLNLFLGYLSYFTGFMCVLVAADNLLVMLVGWEGIGVCSYLLIGYWSHRLSAVKSAQKAILVNRVSDGLLMWGVLWVWYHLGSLEYDLLNVYSASGFVGLSILIGAMGKSAQILFHVWLADAMEGPTPVSALIHAATLVTAGVYLLVRLHIHDEMFVIIVGSLTAFMAGVFGATQSDLKRVIAYSTCSQLGYMMVSLGLGETGGEASMGHLMTHASFKAALFLAAGMVISGNGGNQHIARYGGSAHSAMFTMLTLMVASLSLIGWPELSGFYSKETILNLAAICADPIADVAHTLLLLTAMLTSAYTTKLFYQCFMVDFSGSSVTPVRNVLPILAMAILLLDIMLKVWVGTNLLSGMLFFLPWGVKTLPFGLMVAGILTATAAVGSERFTLIRFCGSRWGFDQLFARSPVNPIFDLGRITWAIGDRGLLSVGNLRA.

16 consecutive transmembrane segments (helical) span residues 1 to 21 (MFLL…SPIA), 31 to 51 (IIAI…YYEV), 52 to 72 (VFMG…VGTF), 82 to 102 (LLTA…HMYA), 112 to 132 (LNLF…LVAA), 135 to 155 (LLVM…LIGY), 175 to 195 (VSDG…GSLE), 198 to 218 (LLNV…GAMG), 237 to 257 (TPVS…YLLV), 264 to 284 (EMFV…FGAT), 291 to 310 (VIAY…LGLG), 321 to 341 (LMTH…VISG), 358 to 378 (AMFT…WPEL), 387 to 407 (ILNL…TLLL), 440 to 460 (VLPI…VWVG), and 468 to 488 (LFFL…AGIL).

Belongs to the complex I subunit 5 family.

It localises to the mitochondrion inner membrane. It catalyses the reaction a ubiquinone + NADH + 5 H(+)(in) = a ubiquinol + NAD(+) + 4 H(+)(out). In terms of biological role, core subunit of the mitochondrial membrane respiratory chain NADH dehydrogenase (Complex I) that is believed to belong to the minimal assembly required for catalysis. Complex I functions in the transfer of electrons from NADH to the respiratory chain. The immediate electron acceptor for the enzyme is believed to be ubiquinone. The polypeptide is NADH-ubiquinone oxidoreductase chain 5 (ND5) (Chlamydomonas reinhardtii (Chlamydomonas smithii)).